Reading from the N-terminus, the 594-residue chain is Protein HOTHEAD (594 aa).

The signal sequence occupies residues 1-19 (MALKLFLFALLLCLPTSLS). 64–91 (DYIVIGGGTAGCPLAATLSQNFSVLVLE) contacts FAD. The active-site Proton acceptor is H529.

It belongs to the GMC oxidoreductase family. Requires FAD as cofactor. In terms of tissue distribution, expressed in roots, leaves, stems, inflorescences and siliques. Found not only in epidermis but also in all sub-epidermal cell layers.

Probable FAD-dependent enzyme. Involved in regulating post-genital organ fusion. Required to limit cellular interactions between contacting epidermal cells during floral development. The polypeptide is Protein HOTHEAD (HTH) (Arabidopsis thaliana (Mouse-ear cress)).